Reading from the N-terminus, the 679-residue chain is MAALITSTTAATAASGPLVDYLWMLILGFIIAFVLAFSVGANDVANSFGTAVGSGVVTLKQACILASIFETVGSVLLGAKVSETIRKGLIDVEMYNSTQGLLMAGSVSAMFGSAVWQLVASFLKLPISGTHCIVGATIGFSLVAKGQEGVKWSELIKIVMSWFVSPLLSGIMSGILFFLVRAFILHKADPVPNGLRALPVFYACTVGINLFSIMYTGAPLLGFDKLPLWGTILISVGCAVFCALIVWFFVCPRMKRKIEREIKCSPSESPLMEKKNSLKEDHEETKLSVSDIENRNPVSEVGPATVPLQAVVEERTVSFKLGDLEEAPERERLPSVDLKEETSIDSTVNGAVQLPNGNLVQFSQAVSNQINSSGHYQYHTVHKDSGLYKELLHKLHLAKVGDCMGDSGDKPLRRNNSYTSYTMAICGMPLDSFRAKEGEQKGEEVEKLTWPNADSKKRIRMDSYTSYCNAVSDLHSASEIDMSVKAEMGLGDRKGSNGSLEEWYDQDKPEVSLLFQFLQILTACFGSFAHGGNDVSNAIGPLVALYLVYDTGDVSSKVATPIWLLLYGGVGICIGLWVWGRRVIQTMGKDLTPITPSSGFSIELASALTVVIASNIGLPISTTHCKVGSVVSVGWLRSKKAVDWRLFRNIFMAWFVTVPISGVISAAIMAIFRYVILRM.

Helical transmembrane passes span 21-41, 62-82, 100-120, 158-178, 203-223, and 230-250; these read YLWM…SVGA, ACIL…AKVS, GLLM…QLVA, IVMS…ILFF, ACTV…LLGF, and GTIL…WFFV. 2 positions are modified to phosphoserine: Ser265 and Ser269. Residues 268 to 288 are disordered; it reads ESPLMEKKNSLKEDHEETKLS. Basic and acidic residues predominate over residues 271-286; sequence LMEKKNSLKEDHEETK. A run of 4 helical transmembrane segments spans residues 511 to 531, 558 to 578, 600 to 620, and 650 to 670; these read VSLL…FAHG, VATP…GLWV, FSIE…GLPI, and IFMA…AIMA. Residues 550-558 form an a region; sequence DTGDVSSKV.

This sequence belongs to the inorganic phosphate transporter (PiT) (TC 2.A.20) family.

Its subcellular location is the cell membrane. The enzyme catalyses 2 Na(+)(out) + phosphate(out) = 2 Na(+)(in) + phosphate(in). In terms of biological role, sodium-phosphate symporter which preferentially transports the monovalent form of phosphate with a stoichiometry of two sodium ions per phosphate ion. May play a role in extracellular matrix and cartilage calcification as well as in vascular calcification. Essential for cell proliferation but this function is independent of its phosphate transporter activity. This chain is Sodium-dependent phosphate transporter 1 (SLC20A1), found in Pongo abelii (Sumatran orangutan).